A 670-amino-acid polypeptide reads, in one-letter code: Cyclic di-GMP phosphodiesterase PdeA (670 aa).

In terms of domain architecture, EAL spans 428–670 (QNKIFQYILK…GFLWHKPEPI (243 aa)).

The enzyme catalyses 3',3'-c-di-GMP + H2O = 5'-phosphoguanylyl(3'-&gt;5')guanosine + H(+). Functionally, phosphodiesterase (PDE) that catalyzes the hydrolysis of cyclic diguanylate (c-di-GMP) to pGpG. This is Cyclic di-GMP phosphodiesterase PdeA from Borreliella burgdorferi (strain ATCC 35210 / DSM 4680 / CIP 102532 / B31) (Borrelia burgdorferi).